A 428-amino-acid polypeptide reads, in one-letter code: Dihydrolipoyllysine-residue acetyltransferase component of pyruvate dehydrogenase complex (428 aa).

The Lipoyl-binding domain occupies 2-77 (AFEFKLPDIG…TVGQTLITLD (76 aa)). Lys43 is subject to N6-lipoyllysine. The tract at residues 88-123 (GQEQEEAKKEEKTETVSKEEKVDAVAPNAPAAEAEA) is disordered. Positions 89 to 110 (QEQEEAKKEEKTETVSKEEKVD) are enriched in basic and acidic residues. A compositionally biased stretch (low complexity) spans 111-123 (AVAPNAPAAEAEA). The 38-residue stretch at 130 to 167 (IAMPSVRKYAREKGVDIRLVQGTGKNGRVLKEDIDAFL) folds into the Peripheral subunit-binding (PSBD) domain. Over residues 177–194 (AAEEKAAPAAAKPATTEG) the composition is skewed to low complexity. The interval 177–201 (AAEEKAAPAAAKPATTEGEFPETRE) is disordered. Residue His399 is part of the active site.

This sequence belongs to the 2-oxoacid dehydrogenase family. As to quaternary structure, forms a 60-polypeptide structural core with icosahedral symmetry. (R)-lipoate is required as a cofactor.

It catalyses the reaction N(6)-[(R)-dihydrolipoyl]-L-lysyl-[protein] + acetyl-CoA = N(6)-[(R)-S(8)-acetyldihydrolipoyl]-L-lysyl-[protein] + CoA. Its function is as follows. The pyruvate dehydrogenase complex catalyzes the overall conversion of pyruvate to acetyl-CoA and CO(2). It contains multiple copies of three enzymatic components: pyruvate dehydrogenase (E1), dihydrolipoamide acetyltransferase (E2) and lipoamide dehydrogenase (E3). This chain is Dihydrolipoyllysine-residue acetyltransferase component of pyruvate dehydrogenase complex (pdhC), found in Geobacillus stearothermophilus (Bacillus stearothermophilus).